A 1916-amino-acid chain; its full sequence is Diacylglycerol kinase eta (1916 aa).

Positions 1–36 are disordered; that stretch reads MAHIKLDTLDVVQRPGTTRRSNSNSGRSSACSSGSL. Over residues 19-36 the composition is skewed to low complexity; it reads RRSNSNSGRSSACSSGSL. A PH domain is found at 82–175; it reads AIIKEGFLLK…WLGSLKTATT (94 aa). 2 consecutive Phorbol-ester/DAG-type zinc fingers follow at residues 195–245 and 268–319; these read HHHW…IANC and PHQW…AVAC. A DAGKc domain is found at 350–486; it reads GNFSPLLVFV…DRWSIMVFEK (137 aa). Residues 623-644 show a composition bias toward basic and acidic residues; sequence DEINTKERRSSRSLRSSEKEAL. 4 disordered regions span residues 623–648, 846–874, 1018–1067, and 1183–1214; these read DEINTKERRSSRSLRSSEKEALQSRA, DRGKEGTEEKKGDIEKEKSSGTDVEKEDN, TLCS…DDNP, and TSTSPTKKSGHGQDISVVVRPPTPLRGDSVKP. Residues 1853-1916 form the SAM domain; it reads WSVNEVVTWL…LQAIKDLSEN (64 aa).

It belongs to the eukaryotic diacylglycerol kinase family.

It localises to the cytoplasm. The enzyme catalyses a 1,2-diacyl-sn-glycerol + ATP = a 1,2-diacyl-sn-glycero-3-phosphate + ADP + H(+). In terms of biological role, phosphorylates diacylglycerol (DAG) to generate phosphatidic acid (PA). The sequence is that of Diacylglycerol kinase eta from Drosophila ananassae (Fruit fly).